Here is a 247-residue protein sequence, read N- to C-terminus: Proteasome subunit alpha type-7-B (247 aa).

Belongs to the peptidase T1A family. As to quaternary structure, the 26S proteasome consists of a 20S proteasome core and two 19S regulatory subunits. The 20S proteasome core is composed of 28 subunits that are arranged in four stacked rings, resulting in a barrel-shaped structure. The two end rings are each formed by seven alpha subunits, and the two central rings are each formed by seven beta subunits. The catalytic chamber with the active sites is on the inside of the barrel. In terms of processing, phosphorylated in G2 phase.

The protein localises to the cytoplasm. It localises to the nucleus. Its function is as follows. The proteasome is a multicatalytic proteinase complex which is characterized by its ability to cleave peptides with Arg, Phe, Tyr, Leu, and Glu adjacent to the leaving group at neutral or slightly basic pH. The proteasome has an ATP-dependent proteolytic activity. The polypeptide is Proteasome subunit alpha type-7-B (psma7-b) (Xenopus laevis (African clawed frog)).